Consider the following 45-residue polypeptide: Large ribosomal subunit protein bL34 (45 aa).

Residues 1–45 (MTKRTFQPNNRRRARKHGFRARMRTRAGRAILSARRGKNRAELSA) are disordered. The segment covering 10–27 (NRRRARKHGFRARMRTRA) has biased composition (basic residues).

It belongs to the bacterial ribosomal protein bL34 family.

In Micrococcus luteus (strain ATCC 4698 / DSM 20030 / JCM 1464 / CCM 169 / CCUG 5858 / IAM 1056 / NBRC 3333 / NCIMB 9278 / NCTC 2665 / VKM Ac-2230) (Micrococcus lysodeikticus), this protein is Large ribosomal subunit protein bL34.